The following is a 359-amino-acid chain: Homeotic protein knotted-1 (359 aa).

2 disordered regions span residues 1-34 and 213-232; these read MEEI…PWAS and LSSG…TELP. Positions 16–31 are enriched in basic residues; it reads GHGHGQHHHHHHHHHP. Positions 242-262 constitute an ELK domain; it reads ELKHHLLKKYSGYLSSLKQEL. Positions 263–326 form a DNA-binding region, homeobox; TALE-type; it reads SKKKKKGKLP…NQRKRHWKPS (64 aa).

The protein belongs to the TALE/KNOX homeobox family. As to quaternary structure, forms homodimers. Binds to MBP2C; this interaction reduces RNA binding capacity. As to expression, expressed in apical meristems of vegetative and floral stems as well as in the underlying ground meristem. Specifically expressed in vascular bundles developing both in the leaf and stem. Very low levels of expression in leaves.

It localises to the nucleus. Its subcellular location is the cell junction. The protein localises to the plasmodesma. The protein resides in the cytoplasm. Binds to RNA. Possible transcription factor that regulates genes involved in development. Mutations in KN-1 alter leaf development. Foci of cells along the lateral vein do not differentiate properly but continue to divide, forming knots. May participate in the switch from indeterminate to determinate cell fates. Probably binds to the DNA sequence 5'-TGAC-3'. In Zea mays (Maize), this protein is Homeotic protein knotted-1 (KN-1).